The primary structure comprises 353 residues: Rhodopsin (353 aa).

Topologically, residues M1 to A36 are extracellular. Residues N2 and N15 are each glycosylated (N-linked (GlcNAc...) asparagine). Residues Y37–V61 form a helical membrane-spanning segment. At T62 to N73 the chain is on the cytoplasmic side. Residues Y74–Y96 form a helical membrane-spanning segment. The Extracellular portion of the chain corresponds to T97 to C110. C110 and C187 form a disulfide bridge. A helical transmembrane segment spans residues N111 to I133. Residues E134–W136 carry the 'Ionic lock' involved in activated form stabilization motif. Residues E134–H152 are Cytoplasmic-facing. Residues A153 to V173 traverse the membrane as a helical segment. Over G174–S202 the chain is Extracellular. The N-linked (GlcNAc...) asparagine glycan is linked to N200. A helical transmembrane segment spans residues F203–G224. Residues R225–R252 are Cytoplasmic-facing. The chain crosses the membrane as a helical span at residues M253–W274. Topologically, residues I275–V286 are extracellular. Residues F287–C308 form a helical membrane-spanning segment. K296 bears the N6-(retinylidene)lysine mark. Topologically, residues M309 to A353 are cytoplasmic. Residues C322 and C323 are each lipidated (S-palmitoyl cysteine). The disordered stretch occupies residues E330–A353. Low complexity predominate over residues A334–A353.

Belongs to the G-protein coupled receptor 1 family. Opsin subfamily. Post-translationally, phosphorylated on some or all of the serine and threonine residues present in the C-terminal region. In terms of processing, contains one covalently linked retinal chromophore.

It is found in the membrane. The protein localises to the cell projection. The protein resides in the cilium. Its subcellular location is the photoreceptor outer segment. Functionally, photoreceptor required for image-forming vision at low light intensity. While most salt water fish species use retinal as chromophore, most freshwater fish use 3-dehydroretinal, or a mixture of retinal and 3-dehydroretinal. Light-induced isomerization of 11-cis to all-trans retinal triggers a conformational change that activates signaling via G-proteins. Subsequent receptor phosphorylation mediates displacement of the bound G-protein alpha subunit by arrestin and terminates signaling. The sequence is that of Rhodopsin (rho) from Tetraodon nigroviridis (Spotted green pufferfish).